The following is a 433-amino-acid chain: UDP-N-acetylglucosamine 1-carboxyvinyltransferase 2 (433 aa).

Residue 23-24 (KN) coordinates phosphoenolpyruvate. R96 contacts UDP-N-acetyl-alpha-D-glucosamine. The active-site Proton donor is the C120. C120 is subject to 2-(S-cysteinyl)pyruvic acid O-phosphothioketal. UDP-N-acetyl-alpha-D-glucosamine is bound by residues 125-129 (RPIDL), D308, and V330.

This sequence belongs to the EPSP synthase family. MurA subfamily.

It is found in the cytoplasm. It carries out the reaction phosphoenolpyruvate + UDP-N-acetyl-alpha-D-glucosamine = UDP-N-acetyl-3-O-(1-carboxyvinyl)-alpha-D-glucosamine + phosphate. The protein operates within cell wall biogenesis; peptidoglycan biosynthesis. Its function is as follows. Cell wall formation. Adds enolpyruvyl to UDP-N-acetylglucosamine. This Enterococcus faecalis (strain ATCC 700802 / V583) protein is UDP-N-acetylglucosamine 1-carboxyvinyltransferase 2.